Reading from the N-terminus, the 258-residue chain is Snake venom serine protease BPA (258 aa).

The signal sequence occupies residues 1–18 (MVLIRVIANLLILQLSNA). The propeptide occupies 19–24 (QKSSEL). Residues 25–249 (VIGGDECNIT…YLPWIQSIIA (225 aa)) form the Peptidase S1 domain. Intrachain disulfides connect Cys-31–Cys-163, Cys-50–Cys-66, Cys-98–Cys-256, Cys-142–Cys-210, Cys-174–Cys-189, and Cys-200–Cys-225. Asn-32 and Asn-44 each carry an N-linked (GlcNAc...) asparagine glycan. Residue His-65 is the Charge relay system of the active site. Asn-103 carries an N-linked (GlcNAc...) asparagine glycan. Asp-110 (charge relay system) is an active-site residue. Residue Asn-121 is glycosylated (N-linked (GlcNAc...) asparagine). The O-linked (GalNAc...) serine glycan is linked to Ser-133. Residues Asn-154 and Asn-170 are each glycosylated (N-linked (GlcNAc...) asparagine). Ser-204 functions as the Charge relay system in the catalytic mechanism. N-linked (GlcNAc...) asparagine glycans are attached at residues Asn-211 and Asn-251. Thr-255 is a glycosylation site (O-linked (GalNAc...) threonine).

Belongs to the peptidase S1 family. Snake venom subfamily. As to quaternary structure, monomer. Post-translationally, N- and O-glycosylated. The glycosylation has a stabilizing effect on the protein. However, the removal of part of the carbohydrates enhances the proteolytic activity of the SVSP towards human and rat fibrinogen. As to expression, expressed by the venom gland.

The protein resides in the secreted. Its activity is regulated as follows. Inhibited by diisopropylfluorophosphate (DFP), but not by SBTI, Antithrombin III/heparin and BPTI, probably due to steric hindrance caused by its huge carbohydrate moietie. Functionally, snake venom serine protease that has a potent and selective fibrinogenolytic activity. Preferentially cleaves the alpha-chain (FGA) of human and rat fibrinogen at Arg-|-Gly bonds, and slowly digests the beta-chain (FGB). In vivo, completely avoids thrombus formation induced in rat, decreases the fibrinogen plasma level and prolonges the recalcification time. Possesses esterolytic and amidolytic activities. The sequence is that of Snake venom serine protease BPA from Bothrops jararaca (Jararaca).